The primary structure comprises 342 residues: Galactose mutarotase (342 aa).

Serine 14 bears the Phosphoserine mark. Residues 81 to 82 and histidine 107 contribute to the beta-D-galactose site; that span reads NR. Serine 124 is subject to Phosphoserine. The active-site Proton donor is the histidine 176. Beta-D-galactose contacts are provided by residues 176-178, aspartate 243, glutamine 279, and glutamate 307; that span reads HSY. The active-site Proton acceptor is glutamate 307.

The protein belongs to the aldose epimerase family. As to quaternary structure, monomer.

Its subcellular location is the cytoplasm. It carries out the reaction alpha-D-galactose = beta-D-galactose. It catalyses the reaction alpha-D-glucose = beta-D-glucose. The protein operates within carbohydrate metabolism; hexose metabolism. It functions in the pathway carbohydrate metabolism; galactose metabolism. Its function is as follows. Mutarotase that catalyzes the interconversion of beta-D-galactose and alpha-D-galactose during galactose metabolism. Beta-D-galactose is metabolized in the liver into glucose 1-phosphate, the primary metabolic fuel, by the action of four enzymes that constitute the Leloir pathway: GALM, GALK1 (galactokinase), GALT (galactose-1-phosphate uridylyltransferase) and GALE (UDP-galactose-4'-epimerase). Involved in the maintenance of the equilibrium between the beta- and alpha-anomers of galactose, therefore ensuring a sufficient supply of the alpha-anomer for GALK1. Also active on D-glucose although shows a preference for galactose over glucose. The sequence is that of Galactose mutarotase (Galm) from Rattus norvegicus (Rat).